A 613-amino-acid chain; its full sequence is Apoptosis-inducing factor 1, mitochondrial (613 aa).

Short sequence motifs (mitochondrial localization signal) lie at residues 1-31 (MFRC…PRQR) and 63-89 (KIDN…KTMK). The transit peptide at 1 to 54 (MFRCGGLAAGALKQKLVPLVRTVCVRSPRQRNRLPGNLFQRWHVPLELQMTRQM) directs the protein to the mitochondrion. The propeptide at 55-101 (ASSGASGGKIDNSVLVLIVGLSTVGAGAYAYKTMKEDEKRYNERISG) is removed in mature form. Residues 100-127 (SGLGLTPEQKQKKAALSASEGEEVPQDK) are disordered. Residue Thr105 is modified to Phosphothreonine. Lys109 is modified (N6-succinyllysine). Ser116 and Ser118 each carry phosphoserine. The segment at 134–483 (FLLIGGGTAA…KPYWHQSMFW (350 aa)) is FAD-dependent oxidoreductase. Residues 138 to 142 (GGGTA), 164 to 165 (ED), Arg172, and Lys177 contribute to the FAD site. NAD(+) is bound at residue Trp196. Val233 is a binding site for FAD. A Glycyl lysine isopeptide (Lys-Gly) (interchain with G-Cter in ubiquitin) cross-link involves residue Lys255. Residue Ser268 is modified to Phosphoserine. An FAD-binding site is contributed by Arg285. At Ser292 the chain carries Phosphoserine. NAD(+)-binding positions include 308 to 311 (GGFL), Glu336, and Lys342. Position 371 is a phosphoserine (Ser371). The residue at position 388 (Lys388) is an N6-acetyllysine. Residue Gly399 participates in NAD(+) binding. Residue Asp438 participates in FAD binding. Positions 446-451 (KLGRRR) match the Nuclear localization signal motif. Residues 453–454 (EH), Trp483, and Glu493 each bind NAD(+). Residues 454–455 (HH) and Trp483 contribute to the FAD site. Residues 513–529 (AQDNPKSATEQSGTGIR) are compositionally biased toward polar residues. The disordered stretch occupies residues 513-554 (AQDNPKSATEQSGTGIRSESETESEASEITIPPSTPAVPQAP). Thr521 carries the phosphothreonine modification. 2 positions are modified to phosphoserine: Ser524 and Ser530. Residue Asn583 coordinates NAD(+). Lys593 bears the N6-acetyllysine mark.

It belongs to the FAD-dependent oxidoreductase family. As to quaternary structure, monomer (oxidized form). Homodimer (reduced form). Upon reduction with NADH, undergoes dimerization and forms tight, long-lived FADH2-NAD charge transfer complexes (CTC) resistant to oxidation. Also dimerizes with isoform 3 preventing its release from mitochondria. Interacts with XIAP/BIRC4. Interacts (via N-terminus) with EIF3G (via C-terminus). Interacts with PRELID1. Interacts with CHCHD4; the interaction increases in presence of NADH. Interacts with processed form of PARP1 (Poly [ADP-ribose] polymerase 1, processed C-terminus); interaction is mediated with poly-ADP-ribose chains attached to PARP1, promoting translocation into the nucleus. The cofactor is FAD. In terms of processing, under normal conditions, a 54-residue N-terminal segment is first proteolytically removed during or just after translocation into the mitochondrial intermembrane space (IMS) by the mitochondrial processing peptidase (MPP) to form the inner-membrane-anchored mature form (AIFmit). During apoptosis, it is further proteolytically processed at amino-acid position 101 leading to the generation of the mature form, which is confined to the mitochondrial IMS in a soluble form (AIFsol). AIFsol is released to the cytoplasm in response to specific death signals, and translocated to the nucleus, where it induces nuclear apoptosis in a caspase-independent manner. Ubiquitination by XIAP/BIRC4 does not lead to proteasomal degradation. Ubiquitination at Lys-255 by XIAP/BIRC4 blocks its ability to bind DNA and induce chromatin degradation, thereby inhibiting its ability to induce cell death. Expressed in all tested tissues. Detected in muscle and skin fibroblasts (at protein level). Expressed in osteoblasts (at protein level). In terms of tissue distribution, brain specific. As to expression, expressed in all tested tissues except brain. Isoform 5 is frequently down-regulated in human cancers.

Its subcellular location is the mitochondrion intermembrane space. The protein resides in the mitochondrion inner membrane. It localises to the cytoplasm. The protein localises to the nucleus. It is found in the perinuclear region. Its subcellular location is the mitochondrion. The protein resides in the cytosol. The catalysed reaction is A + NADH + H(+) = AH2 + NAD(+). Functions both as NADH oxidoreductase and as regulator of apoptosis. In response to apoptotic stimuli, it is released from the mitochondrion intermembrane space into the cytosol and to the nucleus, where it functions as a proapoptotic factor in a caspase-independent pathway. Release into the cytoplasm is mediated upon binding to poly-ADP-ribose chains. The soluble form (AIFsol) found in the nucleus induces 'parthanatos' i.e. caspase-independent fragmentation of chromosomal DNA. Binds to DNA in a sequence-independent manner. Interacts with EIF3G, and thereby inhibits the EIF3 machinery and protein synthesis, and activates caspase-7 to amplify apoptosis. Plays a critical role in caspase-independent, pyknotic cell death in hydrogen peroxide-exposed cells. In contrast, participates in normal mitochondrial metabolism. Plays an important role in the regulation of respiratory chain biogenesis by interacting with CHCHD4 and controlling CHCHD4 mitochondrial import. Its function is as follows. Has NADH oxidoreductase activity. Does not induce nuclear apoptosis. In terms of biological role, pro-apoptotic isoform. This chain is Apoptosis-inducing factor 1, mitochondrial, found in Homo sapiens (Human).